We begin with the raw amino-acid sequence, 564 residues long: Homeobox protein unc-62 (564 aa).

Disordered stretches follow at residues 40–59, 216–270, 293–313, 328–397, and 455–503; these read NEQF…ADPA, ERAS…VMGG, SSSS…LHST, PSTC…KVPK, and IDQN…PSSL. The region spanning 133 to 218 is the MEIS N-terminal domain; the sequence is SSDVCSSASF…PLDIVGDERA (86 aa). Positions 219-230 are enriched in low complexity; it reads SSSQPPMSPGSM. Polar residues-rich tracts occupy residues 328–344 and 381–390; these read PSTC…TPLS and LSDSANGSQN. Residues 392 to 454 constitute a DNA-binding region (homeobox; TALE-type); sequence KRKVPKVFSK…NARRRIVQPM (63 aa). Polar residues-rich tracts occupy residues 455–469 and 494–503; these read IDQN…QMNV and ANYSPDPSSL.

This sequence belongs to the TALE/MEIS homeobox family. In terms of assembly, forms a heterodimer with homeobox ceh-60.

The protein resides in the nucleus. In terms of biological role, acts redundantly with ceh-20 and ceh-40 to perform overlapping roles during embryogenesis. Required for postembryonic development of the ectoderm, including the Q, V and P cell lineages, playing a crucial role in ensuring that these cells and their descendants undergo their invariant patterns of cell division, migration, fusion and morphogenesis. Has a role in the mig-13 pathway to promote anterior migration of neuroblasts in the Q lineage. Required for multiple roles in regulating vulva development. Associates with homeobox ceh-60 to regulate gene expression, including repression of genes involved in innate immunity and activation of genes involved in vitellogenesis. Involved in lipid homeostasis, contributing to the formation of the cuticle. The chain is Homeobox protein unc-62 (unc-62) from Caenorhabditis elegans.